The primary structure comprises 118 residues: RxLR effector protein PITG_19617 (118 aa).

The first 21 residues, 1–21 (MRAVYILAMACAATLQASSSA), serve as a signal peptide directing secretion. The RxLR-dEER motif lies at 50 to 64 (RLLRVEDKEEETEEE).

Belongs to the RxLR effector family.

It localises to the secreted. It is found in the host nucleus. The protein localises to the host cytoplasm. Functionally, effector that enhances P.infestans colonization of Nicotiana benthamiana leaves. In Phytophthora infestans (strain T30-4) (Potato late blight agent), this protein is RxLR effector protein PITG_19617.